Reading from the N-terminus, the 360-residue chain is Photosystem II protein D1 1 (360 aa).

A run of 3 helical transmembrane segments spans residues 29–46, 118–133, and 142–156; these read YIGW…TATT, HFLI…QWEL, and WICV…AATA. H118 serves as a coordination point for chlorophyll a. Y126 is a binding site for pheophytin a. 2 residues coordinate [CaMn4O5] cluster: D170 and E189. Residues 197–218 form a helical membrane-spanning segment; the sequence is FHMLGVAGVFGGALFAAMHGSL. A chlorophyll a-binding site is contributed by H198. A quinone is bound by residues H215 and 264–265; that span reads SF. H215 is a binding site for Fe cation. H272 is a binding site for Fe cation. The helical transmembrane segment at 274-288 threads the bilayer; sequence FLGAWPVVGIWFAAL. [CaMn4O5] cluster is bound by residues H332, E333, D342, and A344. Residues 345 to 360 constitute a propeptide that is removed on maturation; the sequence is SGDAQMVALNAPAIEG.

This sequence belongs to the reaction center PufL/M/PsbA/D family. As to quaternary structure, PSII is composed of 1 copy each of membrane proteins PsbA, PsbB, PsbC, PsbD, PsbE, PsbF, PsbH, PsbI, PsbJ, PsbK, PsbL, PsbM, PsbT, PsbX, PsbY, PsbZ, Psb30/Ycf12, peripheral proteins PsbO, CyanoQ (PsbQ), PsbU, PsbV and a large number of cofactors. It forms dimeric complexes. The D1/D2 heterodimer binds P680, chlorophylls that are the primary electron donor of PSII, and subsequent electron acceptors. It shares a non-heme iron and each subunit binds pheophytin, quinone, additional chlorophylls, carotenoids and lipids. D1 provides most of the ligands for the Mn4-Ca-O5 cluster of the oxygen-evolving complex (OEC). There is also a Cl(-1) ion associated with D1 and D2, which is required for oxygen evolution. The PSII complex binds additional chlorophylls, carotenoids and specific lipids. is required as a cofactor. In terms of processing, C-terminally processed by CtpA; processing is essential to allow assembly of the oxygen-evolving complex and photosynthetic growth. Tyr-161 forms a radical intermediate that is referred to as redox-active TyrZ, YZ or Y-Z. Post-translationally, C-terminally processed by CtpA; processing is essential to allow assembly of the oxygen-evolving complex and thus photosynthetic growth.

It localises to the cellular thylakoid membrane. It catalyses the reaction 2 a plastoquinone + 4 hnu + 2 H2O = 2 a plastoquinol + O2. In terms of biological role, photosystem II (PSII) is a light-driven water:plastoquinone oxidoreductase that uses light energy to abstract electrons from H(2)O, generating O(2) and a proton gradient subsequently used for ATP formation. It consists of a core antenna complex that captures photons, and an electron transfer chain that converts photonic excitation into a charge separation. The D1/D2 (PsbA/PsbD) reaction center heterodimer binds P680, the primary electron donor of PSII as well as several subsequent electron acceptors. This Synechocystis sp. (strain ATCC 27184 / PCC 6803 / Kazusa) protein is Photosystem II protein D1 1.